The sequence spans 295 residues: Protoheme IX farnesyltransferase 2 (295 aa).

9 helical membrane-spanning segments follow: residues 9 to 29, 36 to 56, 80 to 100, 108 to 128, 135 to 155, 163 to 183, 209 to 229, 230 to 250, and 265 to 285; these read ITKP…FFLA, LAVF…GCVF, LISL…GVAL, LAAL…SLYL, GTLV…VAVT, LTLL…IAIF, ILIY…SGYA, GMSY…MAWT, and FVFS…DFKV.

The protein belongs to the UbiA prenyltransferase family. Protoheme IX farnesyltransferase subfamily.

The protein resides in the cell inner membrane. It carries out the reaction heme b + (2E,6E)-farnesyl diphosphate + H2O = Fe(II)-heme o + diphosphate. Its pathway is porphyrin-containing compound metabolism; heme O biosynthesis; heme O from protoheme: step 1/1. Its function is as follows. Converts heme B (protoheme IX) to heme O by substitution of the vinyl group on carbon 2 of heme B porphyrin ring with a hydroxyethyl farnesyl side group. The polypeptide is Protoheme IX farnesyltransferase 2 (Pseudomonas fluorescens (strain Pf0-1)).